The primary structure comprises 251 residues: Triosephosphate isomerase (251 aa).

Substrate is bound by residues N12 and K14. H96 acts as the Electrophile in catalysis. The active-site Proton acceptor is E168.

This sequence belongs to the triosephosphate isomerase family. In terms of assembly, homodimer.

The protein localises to the cytoplasm. It is found in the glycosome. The enzyme catalyses D-glyceraldehyde 3-phosphate = dihydroxyacetone phosphate. The protein operates within carbohydrate biosynthesis; gluconeogenesis. It participates in carbohydrate degradation; glycolysis; D-glyceraldehyde 3-phosphate from glycerone phosphate: step 1/1. The sequence is that of Triosephosphate isomerase from Leishmania mexicana.